The chain runs to 71 residues: Conotoxin Bu25 (71 aa).

A signal peptide spans 1–21; that stretch reads MGMRMMVTVFPLVVLATTVVS. Positions 22–44 are excised as a propeptide; that stretch reads LRSNRASDGRRGIVNKLNDLVPK. R70 is subject to Arginine amide.

Belongs to the conotoxin A superfamily. In terms of processing, contains 3 disulfide bonds. They are not indicated here, since framework IV presents two different connectivities (I-V, II-III, IV-VI and I-III, II-V, IV-VI). In terms of tissue distribution, expressed by the venom duct.

It localises to the secreted. The sequence is that of Conotoxin Bu25 from Conus bullatus (Bubble cone).